A 456-amino-acid chain; its full sequence is Probable glycine dehydrogenase (decarboxylating) subunit 1 (456 aa).

Belongs to the GcvP family. N-terminal subunit subfamily. As to quaternary structure, the glycine cleavage system is composed of four proteins: P, T, L and H. In this organism, the P 'protein' is a heterodimer of two subunits.

The enzyme catalyses N(6)-[(R)-lipoyl]-L-lysyl-[glycine-cleavage complex H protein] + glycine + H(+) = N(6)-[(R)-S(8)-aminomethyldihydrolipoyl]-L-lysyl-[glycine-cleavage complex H protein] + CO2. Its function is as follows. The glycine cleavage system catalyzes the degradation of glycine. The P protein binds the alpha-amino group of glycine through its pyridoxal phosphate cofactor; CO(2) is released and the remaining methylamine moiety is then transferred to the lipoamide cofactor of the H protein. The chain is Probable glycine dehydrogenase (decarboxylating) subunit 1 from Rhizorhabdus wittichii (strain DSM 6014 / CCUG 31198 / JCM 15750 / NBRC 105917 / EY 4224 / RW1) (Sphingomonas wittichii).